Here is a 353-residue protein sequence, read N- to C-terminus: Interferon-stimulated 20 kDa exonuclease-like 2 (353 aa).

2 disordered regions span residues 1 to 93 (MSTL…QPLD) and 125 to 172 (ALPK…SGAS). A compositionally biased stretch (basic and acidic residues) spans 14-23 (PPKKALEGNA). A compositionally biased stretch (basic residues) spans 24–35 (KHRNFVKKRRLL). Residues 54-63 (LHSEPSKKGE) are compositionally biased toward basic and acidic residues. A compositionally biased stretch (basic residues) spans 135-151 (RSQKKSSQKKSSKKNHP). Over residues 152–172 (QKNAPQNSTQAHSENKCSGAS) the composition is skewed to polar residues. The Exonuclease domain occupies 178–353 (KMVAIDCEMV…EHLARNPPTD (176 aa)).

The protein resides in the nucleus. The protein localises to the nucleolus. In terms of biological role, 3'-&gt; 5'-exoribonuclease involved in ribosome biogenesis in the processing of the 12S pre-rRNA. Displays a strong specificity for a 3'-end containing a free hydroxyl group. The protein is Interferon-stimulated 20 kDa exonuclease-like 2 (ISG20L2) of Homo sapiens (Human).